A 331-amino-acid polypeptide reads, in one-letter code: tRNA uridine(34) hydroxylase (331 aa).

Residues 123–217 (TDPEVLLIDT…YLEDVPQEES (95 aa)) enclose the Rhodanese domain. Cysteine 177 (cysteine persulfide intermediate) is an active-site residue. A disordered region spans residues 293 to 331 (KSRGEEHIGSEAAKAIKKRQAEKKLKRKNYHQHLTQGAE). Basic residues predominate over residues 307 to 323 (AIKKRQAEKKLKRKNYH).

It belongs to the TrhO family.

It carries out the reaction uridine(34) in tRNA + AH2 + O2 = 5-hydroxyuridine(34) in tRNA + A + H2O. Its function is as follows. Catalyzes oxygen-dependent 5-hydroxyuridine (ho5U) modification at position 34 in tRNAs. The protein is tRNA uridine(34) hydroxylase of Hahella chejuensis (strain KCTC 2396).